A 121-amino-acid polypeptide reads, in one-letter code: Large ribosomal subunit protein uL18 (121 aa).

It belongs to the universal ribosomal protein uL18 family. In terms of assembly, part of the 50S ribosomal subunit; part of the 5S rRNA/L5/L18/L25 subcomplex. Contacts the 5S and 23S rRNAs.

Functionally, this is one of the proteins that bind and probably mediate the attachment of the 5S RNA into the large ribosomal subunit, where it forms part of the central protuberance. This Roseiflexus castenholzii (strain DSM 13941 / HLO8) protein is Large ribosomal subunit protein uL18.